Consider the following 431-residue polypeptide: Adenylosuccinate lyase (431 aa).

Residues 4–5 (RY), 67–69 (RHD), and 93–94 (TS) contribute to the N(6)-(1,2-dicarboxyethyl)-AMP site. The active-site Proton donor/acceptor is the His141. Position 212 (Gln212) interacts with N(6)-(1,2-dicarboxyethyl)-AMP. Residue Ser262 is the Proton donor/acceptor of the active site. N(6)-(1,2-dicarboxyethyl)-AMP-binding positions include Ser263, 268–270 (KRN), Asn276, and 307–311 (SAERI).

It belongs to the lyase 1 family. Adenylosuccinate lyase subfamily. In terms of assembly, homotetramer. Residues from neighboring subunits contribute catalytic and substrate-binding residues to each active site.

The catalysed reaction is N(6)-(1,2-dicarboxyethyl)-AMP = fumarate + AMP. It catalyses the reaction (2S)-2-[5-amino-1-(5-phospho-beta-D-ribosyl)imidazole-4-carboxamido]succinate = 5-amino-1-(5-phospho-beta-D-ribosyl)imidazole-4-carboxamide + fumarate. Its pathway is purine metabolism; AMP biosynthesis via de novo pathway; AMP from IMP: step 2/2. The protein operates within purine metabolism; IMP biosynthesis via de novo pathway; 5-amino-1-(5-phospho-D-ribosyl)imidazole-4-carboxamide from 5-amino-1-(5-phospho-D-ribosyl)imidazole-4-carboxylate: step 2/2. In terms of biological role, catalyzes two reactions in de novo purine nucleotide biosynthesis. Catalyzes the breakdown of 5-aminoimidazole- (N-succinylocarboxamide) ribotide (SAICAR or 2-[5-amino-1-(5-phospho-beta-D-ribosyl)imidazole-4-carboxamido]succinate) to 5-aminoimidazole-4-carboxamide ribotide (AICAR or 5-amino-1-(5-phospho-beta-D-ribosyl)imidazole-4-carboxamide) and fumarate, and of adenylosuccinate (ADS or N(6)-(1,2-dicarboxyethyl)-AMP) to adenosine monophosphate (AMP) and fumarate. Influences the affinity of glutamyl--tRNA ligase for its substrates and increases its thermostability. The polypeptide is Adenylosuccinate lyase (purB) (Bacillus subtilis (strain 168)).